An 898-amino-acid polypeptide reads, in one-letter code: Fasciclin-2 (898 aa).

The N-terminal stretch at 1–22 is a signal peptide; that stretch reads MRTVACAVLLACFMGCLAGAWA. At 23–764 the chain is on the extracellular side; that stretch reads QSAGLEILPN…EDGSEGQMSS (742 aa). Ig-like C2-type domains are found at residues 31–124, 134–219, 226–316, 321–423, and 428–525; these read PNSE…KQLS, PITW…RPIR, PQMS…VEVT, PRIG…GHLM, and PSFA…IMLR. 6 N-linked (GlcNAc...) asparagine glycosylation sites follow: Asn-35, Asn-51, Asn-149, Asn-192, Asn-297, and Asn-328. Cysteines 48 and 113 form a disulfide. Intrachain disulfides connect Cys-156-Cys-203 and Cys-248-Cys-300. A disulfide bond links Cys-343 and Cys-407. N-linked (GlcNAc...) asparagine glycans are attached at residues Asn-447, Asn-457, and Asn-580. The cysteines at positions 450 and 509 are disulfide-linked. 2 consecutive Fibronectin type-III domains span residues 532-626 and 644-745; these read AVLQ…TPRI and GTEN…VKDP. The helical transmembrane segment at 765–782 threads the bilayer; that stretch reads AAIVVLVVAALLLALLVV. Residues 783–898 are Cytoplasmic-facing; that stretch reads DLVCCLVWRG…TSFVGKDSAV (116 aa).

It is found in the membrane. Functionally, neuronal recognition molecule. Involved in a pathway recognition for axons during the development of nerve fascicles. This is Fasciclin-2 (FAS2) from Schistocerca americana (American grasshopper).